Reading from the N-terminus, the 331-residue chain is 5-dehydro-2-deoxygluconokinase (331 aa).

Belongs to the carbohydrate kinase PfkB family.

The catalysed reaction is 5-dehydro-2-deoxy-D-gluconate + ATP = 6-phospho-5-dehydro-2-deoxy-D-gluconate + ADP + H(+). It participates in polyol metabolism; myo-inositol degradation into acetyl-CoA; acetyl-CoA from myo-inositol: step 5/7. Its function is as follows. Catalyzes the phosphorylation of 5-dehydro-2-deoxy-D-gluconate (2-deoxy-5-keto-D-gluconate or DKG) to 6-phospho-5-dehydro-2-deoxy-D-gluconate (DKGP). The chain is 5-dehydro-2-deoxygluconokinase from Photobacterium profundum (strain SS9).